A 283-amino-acid polypeptide reads, in one-letter code: Bifunctional protein FolD (283 aa).

Position 166 to 168 (glycine 166 to serine 168) interacts with NADP(+).

It belongs to the tetrahydrofolate dehydrogenase/cyclohydrolase family. As to quaternary structure, homodimer.

It carries out the reaction (6R)-5,10-methylene-5,6,7,8-tetrahydrofolate + NADP(+) = (6R)-5,10-methenyltetrahydrofolate + NADPH. The catalysed reaction is (6R)-5,10-methenyltetrahydrofolate + H2O = (6R)-10-formyltetrahydrofolate + H(+). It participates in one-carbon metabolism; tetrahydrofolate interconversion. Functionally, catalyzes the oxidation of 5,10-methylenetetrahydrofolate to 5,10-methenyltetrahydrofolate and then the hydrolysis of 5,10-methenyltetrahydrofolate to 10-formyltetrahydrofolate. The protein is Bifunctional protein FolD of Coxiella burnetii (strain Dugway 5J108-111).